We begin with the raw amino-acid sequence, 141 residues long: Transcription antitermination protein NusB (141 aa).

It belongs to the NusB family.

In terms of biological role, involved in transcription antitermination. Required for transcription of ribosomal RNA (rRNA) genes. Binds specifically to the boxA antiterminator sequence of the ribosomal RNA (rrn) operons. The sequence is that of Transcription antitermination protein NusB from Fervidobacterium nodosum (strain ATCC 35602 / DSM 5306 / Rt17-B1).